The chain runs to 79 residues: MDFTKKILVVFAFTIMLGISSVHCRPSFKPIPLFGEKLTQCFDTRPCLQGMLKCIEFCSSMGTADGQCNNENLCCCTHE.

A signal peptide spans 1 to 24; that stretch reads MDFTKKILVVFAFTIMLGISSVHC. 4 disulfide bridges follow: Cys-41/Cys-76, Cys-47/Cys-68, Cys-54/Cys-74, and Cys-58/Cys-75.

The protein belongs to the DEFL family.

Its subcellular location is the secreted. This is Defensin-like protein 109 from Arabidopsis thaliana (Mouse-ear cress).